The sequence spans 358 residues: Methionine aminopeptidase 2 (358 aa).

Histidine 109 lines the substrate pocket. A divalent metal cation-binding residues include aspartate 130, aspartate 141, and histidine 210. Position 218 (histidine 218) interacts with substrate. Glutamate 243 and glutamate 339 together coordinate a divalent metal cation.

This sequence belongs to the peptidase M24A family. Methionine aminopeptidase eukaryotic type 2 subfamily. Requires Co(2+) as cofactor. Zn(2+) serves as cofactor. Mn(2+) is required as a cofactor. The cofactor is Fe(2+).

The protein localises to the cytoplasm. It carries out the reaction Release of N-terminal amino acids, preferentially methionine, from peptides and arylamides.. Its function is as follows. Cotranslationally removes the N-terminal methionine from nascent proteins. The N-terminal methionine is often cleaved when the second residue in the primary sequence is small and uncharged (Met-Ala-, Cys, Gly, Pro, Ser, Thr, or Val). The sequence is that of Methionine aminopeptidase 2 from Encephalitozoon intestinalis (strain ATCC 50506) (Microsporidian parasite).